The sequence spans 304 residues: PTB domain-containing engulfment adapter protein 1 (304 aa).

Residue T16 is modified to Phosphothreonine. Residues 21–176 enclose the PID domain; the sequence is SKHYIPYNAK…AGMQKRIQDL (156 aa). A coiled-coil region spans residues 159-200; that stretch reads DVETRKQIAGMQKRIQDLETENMELKNKVQDLESRLRTTQVS. The residue at position 223 (S223) is a Phosphoserine.

This sequence belongs to the ced-6 family. Homodimer. Interacts with clathrin and MEGF10. Interacts with GDP-bound ARF6, but not with GTP-bound ARF6. Part of a complex composed of GULP1, ACAP1 and ARF6. Interacts with ACAP1, LRP1 and STAB2. In terms of tissue distribution, detected throughout the brain, particularly in Purkinje cells, hippocampal and cortical neurons (at protein level).

The protein localises to the cytoplasm. Its function is as follows. Modulates cellular glycosphingolipid and cholesterol transport. May play a role in the internalization of various LRP1 ligands, such as PSAP. May function as an adapter protein. Required for efficient phagocytosis of apoptotic cells. Increases cellular levels of GTP-bound ARF6. The sequence is that of PTB domain-containing engulfment adapter protein 1 (Gulp1) from Mus musculus (Mouse).